The primary structure comprises 389 residues: Succinate--CoA ligase [ADP-forming] subunit beta (389 aa).

Residues Lys46, 53–55 (GRG), Glu99, Cys102, and Glu107 contribute to the ATP site. Residues Asn199 and Asp213 each contribute to the Mg(2+) site. Residues Asn264 and 321–323 (GIV) each bind substrate.

It belongs to the succinate/malate CoA ligase beta subunit family. Heterotetramer of two alpha and two beta subunits. It depends on Mg(2+) as a cofactor.

The catalysed reaction is succinate + ATP + CoA = succinyl-CoA + ADP + phosphate. It catalyses the reaction GTP + succinate + CoA = succinyl-CoA + GDP + phosphate. It functions in the pathway carbohydrate metabolism; tricarboxylic acid cycle; succinate from succinyl-CoA (ligase route): step 1/1. Succinyl-CoA synthetase functions in the citric acid cycle (TCA), coupling the hydrolysis of succinyl-CoA to the synthesis of either ATP or GTP and thus represents the only step of substrate-level phosphorylation in the TCA. The beta subunit provides nucleotide specificity of the enzyme and binds the substrate succinate, while the binding sites for coenzyme A and phosphate are found in the alpha subunit. The sequence is that of Succinate--CoA ligase [ADP-forming] subunit beta from Haemophilus influenzae (strain PittEE).